The chain runs to 286 residues: MSEDNRPLEEQLGNRAESPNTPESVREDNSKSQNNHLNQPSSTPQTPETTADNTFVESELLQDSQGIEKLLATLAEQIGSTQEGQEILGQLQPLLTNLIQQNESLLQTNQSLKDQLEEQNQQIDAAKRRYIGLAAEFDNFRKRTLREKEELEKQAKRKTLSELLTVVDNFERARLQIKPSNEGEGEIHKSYQGVYKNLVDSLKRLGVSAMRAEGEPFDPMYHEAMLREPTNDFPEGTVIEQLVRGYLLDDQVLRHAMVKVAAPKEPDSSETESTSESVSDVQQPTT.

Disordered stretches follow at residues 1 to 51 (MSED…ETTA) and 260 to 286 (VAAP…QPTT). Low complexity-rich tracts occupy residues 39–50 (QPSSTPQTPETT) and 271–286 (TEST…QPTT).

The protein belongs to the GrpE family. Homodimer.

It is found in the cytoplasm. Functionally, participates actively in the response to hyperosmotic and heat shock by preventing the aggregation of stress-denatured proteins, in association with DnaK and GrpE. It is the nucleotide exchange factor for DnaK and may function as a thermosensor. Unfolded proteins bind initially to DnaJ; upon interaction with the DnaJ-bound protein, DnaK hydrolyzes its bound ATP, resulting in the formation of a stable complex. GrpE releases ADP from DnaK; ATP binding to DnaK triggers the release of the substrate protein, thus completing the reaction cycle. Several rounds of ATP-dependent interactions between DnaJ, DnaK and GrpE are required for fully efficient folding. The chain is Protein GrpE from Gloeothece citriformis (strain PCC 7424) (Cyanothece sp. (strain PCC 7424)).